The following is a 497-amino-acid chain: Vacuolar fusion protein CCZ1 homolog B (497 aa).

Positions 244–284 are disordered; the sequence is GTSSWSYLRKGSGSPQISSRSTTVPPLGSGGTLPSGNGSST.

It belongs to the CCZ1 family. In terms of assembly, interacts with MON1.

It is found in the endosome. It localises to the prevacuolar compartment. Its function is as follows. Plays an important role in membrane trafficking through the secretory apparatus. In complex with MON1, acts as a guanine exchange factor (GEF) for RABG3F of the RAB7 protein family. Promotes the exchange of GDP to GTP, converting RABG3F from an inactive GDP-bound form into an active GTP-bound form. The RABG3F active form is involved in protein trafficking from prevacuolar compartments (PVCs) to vacuoles. May serve as a linker between Rab5 and Rab7 protein families in PVCs and mediate PVC maturation. The polypeptide is Vacuolar fusion protein CCZ1 homolog B (Arabidopsis thaliana (Mouse-ear cress)).